We begin with the raw amino-acid sequence, 716 residues long: 1,4-alpha-glucan branching enzyme GlgB (716 aa).

The active-site Nucleophile is the Asp-398. Glu-451 acts as the Proton donor in catalysis.

Belongs to the glycosyl hydrolase 13 family. GlgB subfamily. Monomer.

The catalysed reaction is Transfers a segment of a (1-&gt;4)-alpha-D-glucan chain to a primary hydroxy group in a similar glucan chain.. Its pathway is glycan biosynthesis; glycogen biosynthesis. Catalyzes the formation of the alpha-1,6-glucosidic linkages in glycogen by scission of a 1,4-alpha-linked oligosaccharide from growing alpha-1,4-glucan chains and the subsequent attachment of the oligosaccharide to the alpha-1,6 position. The chain is 1,4-alpha-glucan branching enzyme GlgB from Nitrobacter winogradskyi (strain ATCC 25391 / DSM 10237 / CIP 104748 / NCIMB 11846 / Nb-255).